A 353-amino-acid polypeptide reads, in one-letter code: Ribosomal RNA large subunit methyltransferase M (353 aa).

S-adenosyl-L-methionine is bound by residues Ser-179, 212–215 (APGG), Asp-231, Asp-251, and Asp-267. Lys-296 functions as the Proton acceptor in the catalytic mechanism.

This sequence belongs to the class I-like SAM-binding methyltransferase superfamily. RNA methyltransferase RlmE family. RlmM subfamily. As to quaternary structure, monomer.

It is found in the cytoplasm. It catalyses the reaction cytidine(2498) in 23S rRNA + S-adenosyl-L-methionine = 2'-O-methylcytidine(2498) in 23S rRNA + S-adenosyl-L-homocysteine + H(+). Its function is as follows. Catalyzes the 2'-O-methylation at nucleotide C2498 in 23S rRNA. The protein is Ribosomal RNA large subunit methyltransferase M of Laribacter hongkongensis (strain HLHK9).